A 1132-amino-acid polypeptide reads, in one-letter code: Tyrosine-protein kinase JAK2 (1132 aa).

Residues 1 to 239 (MGMACLTMTE…RYRFRRFIQQ (239 aa)) form an interaction with cytokine/interferon/growth hormone receptors region. The region spanning 37 to 380 (PVLLVYLYHS…GYYRLTADAH (344 aa)) is the FERM domain. Tyr119 carries the post-translational modification Phosphotyrosine; by autocatalysis. 2 positions are modified to phosphotyrosine: Tyr372 and Tyr373. One can recognise an SH2; atypical domain in the interval 401–482 (HGPISMDFAI…SLKDLLNCYQ (82 aa)). Ser523 is modified (phosphoserine). One can recognise a Protein kinase 1 domain in the interval 545 to 809 (LIFNESLGQG…AIIRDLNSLF (265 aa)). Residues Tyr570 and Tyr813 each carry the phosphotyrosine modification. The region spanning 849–1126 (LKFLQQLGKG…RDLALRVDQI (278 aa)) is the Protein kinase 2 domain. 855–863 (LGKGNFGSV) contacts ATP. A Phosphotyrosine; by autocatalysis modification is found at Tyr868. Lys882 contacts ATP. Tyr966 and Tyr972 each carry phosphotyrosine; by autocatalysis. Catalysis depends on Asp976, which acts as the Proton acceptor. Residues Tyr1007 and Tyr1008 each carry the phosphotyrosine; by autocatalysis modification.

This sequence belongs to the protein kinase superfamily. Tyr protein kinase family. JAK subfamily. Interacts with IL23R, SKB1 and STAM2. Interacts with EPOR. Interacts with LYN. Interacts with SIRPA. Interacts with SH2B1. Interacts with TEC. Interacts with IFNGR2 (via intracellular domain). Interacts with LEPR (Isoform B). Interacts with HSP90AB1; promotes functional activation in a heat shock-dependent manner. Interacts with STRA6. Interacts with RHEX; this interaction occurs in a erythropoietin (EPO)-dependent manner. Interacts with ASB2; the interaction targets JAK2 for Notch-induced proteasomal degradation. Requires Mg(2+) as cofactor. In terms of processing, autophosphorylated, leading to regulate its activity. Leptin promotes phosphorylation on tyrosine residues, including phosphorylation on Tyr-813. Autophosphorylation on Tyr-119 in response to EPO down-regulates its kinase activity. Autophosphorylation on Tyr-868, Tyr-966 and Tyr-972 in response to growth hormone (GH) are required for maximal kinase activity. Also phosphorylated by TEC. Phosphorylated on tyrosine residues in response to interferon gamma signaling. Phosphorylated on tyrosine residues in response to a signaling cascade that is activated by increased cellular retinol. Post-translationally, undergoes Notch-induced ubiquitination and subsequent proteasomal degradation which is mediated by ASB1 or ASB2, the substrate-recognition components of probable ECS E3 ubiquitin-protein ligase complexes.

The protein localises to the endomembrane system. Its subcellular location is the cytoplasm. It is found in the nucleus. The catalysed reaction is L-tyrosyl-[protein] + ATP = O-phospho-L-tyrosyl-[protein] + ADP + H(+). Its activity is regulated as follows. Regulated by autophosphorylation, can both activate or decrease activity. Heme regulates its activity by enhancing the phosphorylation on Tyr-1007 and Tyr-1008. In terms of biological role, non-receptor tyrosine kinase involved in various processes such as cell growth, development, differentiation or histone modifications. Mediates essential signaling events in both innate and adaptive immunity. In the cytoplasm, plays a pivotal role in signal transduction via its association with type I receptors such as growth hormone (GHR), prolactin (PRLR), leptin (LEPR), erythropoietin (EPOR), thrombopoietin (THPO); or type II receptors including IFN-alpha, IFN-beta, IFN-gamma and multiple interleukins. Following ligand-binding to cell surface receptors, phosphorylates specific tyrosine residues on the cytoplasmic tails of the receptor, creating docking sites for STATs proteins. Subsequently, phosphorylates the STATs proteins once they are recruited to the receptor. Phosphorylated STATs then form homodimer or heterodimers and translocate to the nucleus to activate gene transcription. For example, cell stimulation with erythropoietin (EPO) during erythropoiesis leads to JAK2 autophosphorylation, activation, and its association with erythropoietin receptor (EPOR) that becomes phosphorylated in its cytoplasmic domain. Then, STAT5 (STAT5A or STAT5B) is recruited, phosphorylated and activated by JAK2. Once activated, dimerized STAT5 translocates into the nucleus and promotes the transcription of several essential genes involved in the modulation of erythropoiesis. Part of a signaling cascade that is activated by increased cellular retinol and that leads to the activation of STAT5 (STAT5A or STAT5B). In addition, JAK2 mediates angiotensin-2-induced ARHGEF1 phosphorylation. Plays a role in cell cycle by phosphorylating CDKN1B. Cooperates with TEC through reciprocal phosphorylation to mediate cytokine-driven activation of FOS transcription. In the nucleus, plays a key role in chromatin by specifically mediating phosphorylation of 'Tyr-41' of histone H3 (H3Y41ph), a specific tag that promotes exclusion of CBX5 (HP1 alpha) from chromatin. Up-regulates the potassium voltage-gated channel activity of KCNA3. This Pongo abelii (Sumatran orangutan) protein is Tyrosine-protein kinase JAK2.